Here is a 107-residue protein sequence, read N- to C-terminus: UPF0145 protein BVU_2335 (107 aa).

The protein belongs to the UPF0145 family.

This is UPF0145 protein BVU_2335 from Phocaeicola vulgatus (strain ATCC 8482 / DSM 1447 / JCM 5826 / CCUG 4940 / NBRC 14291 / NCTC 11154) (Bacteroides vulgatus).